The following is a 516-amino-acid chain: Multicopper oxidase CueO (516 aa).

A signal peptide (tat-type signal) is located at residues 1–28; the sequence is MQRRDFLKYSVALGVASALPLWSRAVFA. 3 consecutive Plastocyanin-like domains span residues 55–165, 227–292, and 399–516; these read GQST…IEDD, PRGW…DNKP, and GGKF…GFTV. Cu cation contacts are provided by histidine 101, histidine 103, histidine 141, and histidine 143. Cu cation is bound by residues histidine 443, histidine 446, histidine 448, histidine 499, cysteine 500, histidine 501, and histidine 505.

This sequence belongs to the multicopper oxidase family. In terms of assembly, monomer. The cofactor is Cu cation. In terms of processing, predicted to be exported by the Tat system. The position of the signal peptide cleavage has not been experimentally proven.

It is found in the periplasm. The enzyme catalyses 4 Cu(+) + O2 + 4 H(+) = 4 Cu(2+) + 2 H2O. Its function is as follows. Multicopper oxidase involved in copper homeostasis and copper tolerance under aerobic conditions. Is responsible for the oxidation of Cu(+) to the less harmful Cu(2+) in the periplasm, thereby preventing Cu(+) from entering the cytoplasm. This chain is Multicopper oxidase CueO (cueO), found in Escherichia coli O157:H7.